A 393-amino-acid chain; its full sequence is MTTEVNQLSEHPLVSPKAEPQPETKPENLPRSHGDVGLQKETVVPGIVDFELIHEELKTTKPQTSQPTPSAYRFGRLSHHSFFSRHHPQPQRVTHIQVTGREDLEHSLPLTTSFQLLQAPGVQPMDLTPSADIAGKPVCVVRDEFSLSALTQPTFLSRCLMGMPTISVPIGDPQSNRNPQLSTSDTWRKKLKDLASRVTVFTKEIQPKPDEQKEEPPLREPPPREQGAKYSAETGRLIPASSQALTRRNRQGQRVHPSSKDGGVQASILQDQELLILELLCQILQTDSLRAIQFWLLYAPSKEKDLALGLLQTAVAQLIPQPLSSIPAEKLWNHLQELQEPQETQEAAYSPSLKKTRSPPLPKTDKPEYIGKAQVLLVHPSEDPEEKTTKAES.

4 disordered regions span residues 1 to 39 (MTTE…VGLQ), 168 to 188 (VPIG…DTWR), 202 to 264 (TKEI…DGGV), and 340 to 393 (EPQE…KAES). A compositionally biased stretch (basic and acidic residues) spans 20–34 (PQPETKPENLPRSHG). Residues 173–185 (PQSNRNPQLSTSD) show a composition bias toward polar residues. 2 stretches are compositionally biased toward basic and acidic residues: residues 205–227 (IQPK…REQG) and 380–393 (PSED…KAES).

This sequence belongs to the TBATA family. In terms of assembly, interacts with KIF17. Interacts with UBA3. Expressed in the subcapsular region of the thymus and lymph node (at protein level). Highly expressed in thymic cortical stromal cells and testis. Lower levels found in brain cortex, hippocampus, kidney, cerebellum, skeletal muscle, epididymis and ovary. No expression detected in other lymphoid organs including bone marrow and spleen. Isoform 1 and isoform 2 are expressed predominantly in testis. Isoform 3, isoform 4 and isoform 5 are expressed predominantly in thymus although isoform 3 is also expressed in testis. In the CNS, highly expressed in restricted areas, the cerebellum and hippocampus.

The protein localises to the cytoplasm. It localises to the cytosol. Its subcellular location is the nucleus. Isoform 1 and isoform 2 may play a role in spermatid differentiation. Isoform 1 and isoform 2 regulate thymus function by modulating stromal cell proliferation via interference with the NEDD8 pathway. The chain is Protein TBATA (Tbata) from Mus musculus (Mouse).